A 342-amino-acid polypeptide reads, in one-letter code: Dual-specificity RNA methyltransferase RlmN (342 aa).

Glu92 (proton acceptor) is an active-site residue. A Radical SAM core domain is found at 98 to 329 (DLPRSTLCVS…THVRRSRGGE (232 aa)). Cys105 and Cys334 are disulfide-bonded. Cys112, Cys116, and Cys119 together coordinate [4Fe-4S] cluster. S-adenosyl-L-methionine is bound by residues 161 to 162 (GE), Ser193, 215 to 217 (SLH), and Asn291. Cys334 acts as the S-methylcysteine intermediate in catalysis.

This sequence belongs to the radical SAM superfamily. RlmN family. [4Fe-4S] cluster is required as a cofactor.

The protein localises to the cytoplasm. The catalysed reaction is adenosine(2503) in 23S rRNA + 2 reduced [2Fe-2S]-[ferredoxin] + 2 S-adenosyl-L-methionine = 2-methyladenosine(2503) in 23S rRNA + 5'-deoxyadenosine + L-methionine + 2 oxidized [2Fe-2S]-[ferredoxin] + S-adenosyl-L-homocysteine. It catalyses the reaction adenosine(37) in tRNA + 2 reduced [2Fe-2S]-[ferredoxin] + 2 S-adenosyl-L-methionine = 2-methyladenosine(37) in tRNA + 5'-deoxyadenosine + L-methionine + 2 oxidized [2Fe-2S]-[ferredoxin] + S-adenosyl-L-homocysteine. Specifically methylates position 2 of adenine 2503 in 23S rRNA and position 2 of adenine 37 in tRNAs. m2A2503 modification seems to play a crucial role in the proofreading step occurring at the peptidyl transferase center and thus would serve to optimize ribosomal fidelity. The polypeptide is Dual-specificity RNA methyltransferase RlmN (Syntrophobacter fumaroxidans (strain DSM 10017 / MPOB)).